Consider the following 222-residue polypeptide: Pro-opiomelanocortin (222 aa).

Residues 1–18 (MCPVWLLVAVVVVGGSRG) form the signal peptide. Positions 19–90 (AVSQCWEHPS…SSSSSSSPQS (72 aa)) are excised as a propeptide. 2 disordered regions span residues 56–98 (IPGN…SMEH) and 148–170 (EEEK…LQEK). The segment covering 70 to 93 (PSSSSSFILPSSSSSSSSPQSKRS) has biased composition (low complexity). Acidic residues predominate over residues 148-162 (EEEKAQEVMAEEEEE).

This sequence belongs to the POMC family. Post-translationally, specific enzymatic cleavages at paired basic residues yield the different active peptides.

It is found in the secreted. Functionally, stimulates the adrenal glands to release cortisol. Anorexigenic peptide. Increases the pigmentation of skin by increasing melanin production in melanocytes. In terms of biological role, increases the pigmentation of skin by increasing melanin production in melanocytes. Its function is as follows. Endogenous orexigenic opiate. Functionally, endogenous opiate. The protein is Pro-opiomelanocortin (pomc) of Thunnus obesus (Bigeye tuna).